A 222-amino-acid chain; its full sequence is MATPQSVFVFAICILMITELILASKSYYDILGVPKSASERQIKKAFHKLAMKYHPDKNKSPDAEAKFREIAEAYETLSDAHRRKEYDTVGHTAFTNGKGQRGSGSPFEQSFNFNFDDLFKDFNLFGQNQNTRSKKHFENHFQTHQDGSNRQRHHFQEFSFGGGLFDDMFEDMEKMFSFSGFDTTNRHTVQTENRFHGSSKHCRTVTQRRGNMVTTYTDCSGQ.

The signal sequence occupies residues 1 to 23; that stretch reads MATPQSVFVFAICILMITELILA. The region spanning 26 to 90 is the J domain; sequence SYYDILGVPK…HRRKEYDTVG (65 aa). The interval 91–222 is divergent targeting domain; that stretch reads HTAFTNGKGQ…VTTYTDCSGQ (132 aa). Residue Ser133 is modified to Phosphoserine.

As to quaternary structure, interacts with HSPA5/BiP; interaction is direct. Interacts with ERN1/IRE1 (via the luminal region). Interacts with DERL1.

The protein localises to the endoplasmic reticulum lumen. Its function is as follows. Co-chaperone for Hsp70 protein HSPA5/BiP that acts as a key repressor of the ERN1/IRE1-mediated unfolded protein response (UPR). J domain-containing co-chaperones stimulate the ATPase activity of Hsp70 proteins and are required for efficient substrate recognition by Hsp70 proteins. In the unstressed endoplasmic reticulum, interacts with the luminal region of ERN1/IRE1 and selectively recruits HSPA5/BiP: HSPA5/BiP disrupts the dimerization of the active ERN1/IRE1 luminal region, thereby inactivating ERN1/IRE1. Also involved in endoplasmic reticulum-associated degradation (ERAD) of misfolded proteins. Required for survival of B-cell progenitors and normal antibody production. This is DnaJ homolog subfamily B member 9 from Cricetulus griseus (Chinese hamster).